A 181-amino-acid polypeptide reads, in one-letter code: uncharacterized protein (181 aa).

The protein to M.jannaschii MJ1106.

This is an uncharacterized protein from Methanothermobacter thermautotrophicus (strain ATCC 29096 / DSM 1053 / JCM 10044 / NBRC 100330 / Delta H) (Methanobacterium thermoautotrophicum).